A 218-amino-acid polypeptide reads, in one-letter code: N-(5'-phosphoribosyl)anthranilate isomerase (218 aa).

It belongs to the TrpF family.

The catalysed reaction is N-(5-phospho-beta-D-ribosyl)anthranilate = 1-(2-carboxyphenylamino)-1-deoxy-D-ribulose 5-phosphate. It participates in amino-acid biosynthesis; L-tryptophan biosynthesis; L-tryptophan from chorismate: step 3/5. In Desulfatibacillum aliphaticivorans, this protein is N-(5'-phosphoribosyl)anthranilate isomerase.